The chain runs to 607 residues: Arginine decarboxylase (607 aa).

An N6-(pyridoxal phosphate)lysine modification is found at K104. Substrate is bound at residue 290–300 (LDCGGGLGVDY).

Belongs to the Orn/Lys/Arg decarboxylase class-II family. SpeA subfamily. Pyridoxal 5'-phosphate is required as a cofactor. It depends on Mg(2+) as a cofactor.

It catalyses the reaction L-arginine + H(+) = agmatine + CO2. The protein operates within amine and polyamine biosynthesis; agmatine biosynthesis; agmatine from L-arginine: step 1/1. The protein is Arginine decarboxylase (SPE1) of Avena sativa (Oat).